We begin with the raw amino-acid sequence, 374 residues long: AA14 family lytic polysaccharide monooxygenase B (374 aa).

The first 18 residues, 1–18, serve as a signal peptide directing secretion; that stretch reads MIPVFLAAIAVFLPLTSG. Residues asparagine 31, asparagine 49, asparagine 94, and asparagine 151 are each glycosylated (N-linked (GlcNAc...) asparagine). 5 cysteine pairs are disulfide-bonded: cysteine 85/cysteine 108, cysteine 127/cysteine 154, cysteine 171/cysteine 176, cysteine 178/cysteine 200, and cysteine 220/cysteine 236. 2 N-linked (GlcNAc...) asparagine glycosylation sites follow: asparagine 235 and asparagine 315. The tract at residues 306–374 is disordered; the sequence is ISNATPAPSN…TQSRKMRYVF (69 aa). Positions 313–344 are enriched in low complexity; sequence PSNGSCSSRPPSSPVSSSAASTTTSRSPRPSA.

The protein belongs to the polysaccharide monooxygenase AA14 family. The cofactor is Cu(2+).

The protein localises to the secreted. In terms of biological role, lytic polysaccharide monooxygenase (LPMO) that oxidatively cleaves xylan with both C1 and C4 regioselectivity and that specifically targets the protective shield made by heteroxylans that cover cellulose microfibrils in wood. Catalysis by LPMOs requires the reduction of the active-site copper from Cu(II) to Cu(I) by a reducing agent and H(2)O(2) or O(2) as a cosubstrate. Cleavage occurs only when xylans are bound to cellulose and not when they are in solution. Increases the efficiency of wood saccharification through oxidative cleavage of highly refractory xylan-coated cellulose fibers via synergistic relationship with xylan-active enzymes, xylobiohydrolases and cellobiohydrolases. The sequence is that of AA14 family lytic polysaccharide monooxygenase B from Pycnoporus cinnabarinus (Cinnabar-red polypore).